The chain runs to 253 residues: 3-deoxy-manno-octulosonate cytidylyltransferase (253 aa).

The protein belongs to the KdsB family.

The protein resides in the cytoplasm. The catalysed reaction is 3-deoxy-alpha-D-manno-oct-2-ulosonate + CTP = CMP-3-deoxy-beta-D-manno-octulosonate + diphosphate. It participates in nucleotide-sugar biosynthesis; CMP-3-deoxy-D-manno-octulosonate biosynthesis; CMP-3-deoxy-D-manno-octulosonate from 3-deoxy-D-manno-octulosonate and CTP: step 1/1. Its pathway is bacterial outer membrane biogenesis; lipopolysaccharide biosynthesis. In terms of biological role, activates KDO (a required 8-carbon sugar) for incorporation into bacterial lipopolysaccharide in Gram-negative bacteria. The polypeptide is 3-deoxy-manno-octulosonate cytidylyltransferase (Geotalea daltonii (strain DSM 22248 / JCM 15807 / FRC-32) (Geobacter daltonii)).